The sequence spans 203 residues: Secreted phosphoprotein 24 (203 aa).

Positions 1–23 (MEKMAMKMLVIFVLGMNHWTCTG) are cleaved as a signal peptide. 2 disulfide bridges follow: cysteine 86–cysteine 97 and cysteine 110–cysteine 128. At serine 90 the chain carries Phosphoserine. Residues serine 138, serine 139, serine 166, and serine 175 each carry the phosphoserine modification.

The protein belongs to the SPP2 family. In terms of processing, multiply phosphorylated at serine residues in Ser-X-Glu/Ser(P) sequences, a recognition motif for phosphorylation by secretory pathway protein kinase. Phosphorylation sites are present in the extracellular medium. In terms of tissue distribution, in liver and bone but not in heart, lung, kidney, or spleen.

It localises to the secreted. Its function is as follows. Could coordinate an aspect of bone turnover. This is Secreted phosphoprotein 24 (SPP2) from Bos taurus (Bovine).